A 222-amino-acid polypeptide reads, in one-letter code: Small ribosomal subunit protein uS7m (222 aa).

A mitochondrion-targeting transit peptide spans 1 to 14 (MSKKLANFAQKRWI).

It belongs to the universal ribosomal protein uS7 family. As to quaternary structure, component of the mitochondrial ribosome small subunit (28S) which comprises a 12S rRNA and about 30 distinct proteins.

The protein localises to the mitochondrion. The sequence is that of Small ribosomal subunit protein uS7m (mrps-7) from Caenorhabditis briggsae.